Reading from the N-terminus, the 317-residue chain is MTSSYKDSSLKVFSLNSNPELANEIATHIGTNLGKCTVSKFSDGEVQINLEESVRGCDVYVVQSTCAPVNQHIMELLIMIDALKRASAKSINIVMPYYGYARQDRKARSREPIAAKLVADLIEKAGANRVITLDLHAPQIQGFFDIPIDHLQGVPILSSYFEQKNLDDVIVVSPDHGGVTRARKMADRLKAPIGIIDKRRPKPNVAEIMNIIGNIEGKTAILIDDIIDTAGTITLAANALIENGAKEVYACCTHPVLSGPAIERIDNSKIKELVITDSIPLPDEKFSTKITALSVAPLIGEAIIRVHEMQSVSILFD.

ATP contacts are provided by residues 43–45 (DGE) and 102–103 (RQ). Residues histidine 136 and aspartate 175 each coordinate Mg(2+). The active site involves lysine 198. D-ribose 5-phosphate contacts are provided by residues arginine 200, aspartate 224, and 228–232 (DTAGT).

The protein belongs to the ribose-phosphate pyrophosphokinase family. Class I subfamily. In terms of assembly, homohexamer. Requires Mg(2+) as cofactor.

It localises to the cytoplasm. It catalyses the reaction D-ribose 5-phosphate + ATP = 5-phospho-alpha-D-ribose 1-diphosphate + AMP + H(+). The protein operates within metabolic intermediate biosynthesis; 5-phospho-alpha-D-ribose 1-diphosphate biosynthesis; 5-phospho-alpha-D-ribose 1-diphosphate from D-ribose 5-phosphate (route I): step 1/1. Functionally, involved in the biosynthesis of the central metabolite phospho-alpha-D-ribosyl-1-pyrophosphate (PRPP) via the transfer of pyrophosphoryl group from ATP to 1-hydroxyl of ribose-5-phosphate (Rib-5-P). The polypeptide is Ribose-phosphate pyrophosphokinase (Oceanobacillus iheyensis (strain DSM 14371 / CIP 107618 / JCM 11309 / KCTC 3954 / HTE831)).